A 463-amino-acid chain; its full sequence is L-seryl-tRNA(Sec) selenium transferase (463 aa).

Residue Lys294 is modified to N6-(pyridoxal phosphate)lysine.

It belongs to the SelA family. Requires pyridoxal 5'-phosphate as cofactor.

Its subcellular location is the cytoplasm. The catalysed reaction is L-seryl-tRNA(Sec) + selenophosphate + H(+) = L-selenocysteinyl-tRNA(Sec) + phosphate. It participates in aminoacyl-tRNA biosynthesis; selenocysteinyl-tRNA(Sec) biosynthesis; selenocysteinyl-tRNA(Sec) from L-seryl-tRNA(Sec) (bacterial route): step 1/1. Functionally, converts seryl-tRNA(Sec) to selenocysteinyl-tRNA(Sec) required for selenoprotein biosynthesis. In Hyphomonas neptunium (strain ATCC 15444), this protein is L-seryl-tRNA(Sec) selenium transferase.